Here is a 184-residue protein sequence, read N- to C-terminus: UPF0301 protein RHOS4_26140 (184 aa).

Belongs to the UPF0301 (AlgH) family.

The polypeptide is UPF0301 protein RHOS4_26140 (Cereibacter sphaeroides (strain ATCC 17023 / DSM 158 / JCM 6121 / CCUG 31486 / LMG 2827 / NBRC 12203 / NCIMB 8253 / ATH 2.4.1.) (Rhodobacter sphaeroides)).